A 206-amino-acid chain; its full sequence is LexA repressor (206 aa).

Residues 28–48 (VREIGQAVGLASSSTVHGHLS) constitute a DNA-binding region (H-T-H motif). Active-site for autocatalytic cleavage activity residues include serine 128 and lysine 166.

The protein belongs to the peptidase S24 family. As to quaternary structure, homodimer.

The catalysed reaction is Hydrolysis of Ala-|-Gly bond in repressor LexA.. In terms of biological role, represses a number of genes involved in the response to DNA damage (SOS response), including recA and lexA. In the presence of single-stranded DNA, RecA interacts with LexA causing an autocatalytic cleavage which disrupts the DNA-binding part of LexA, leading to derepression of the SOS regulon and eventually DNA repair. The protein is LexA repressor of Bacillus thuringiensis (strain Al Hakam).